The sequence spans 62 residues: Rubredoxin-2 (62 aa).

The region spanning 7–58 (MWRCQMVNCGYVYDPDRGDKRRKVPAGTKFEDLPEDWRCPVCGAGKKSFRRL) is the Rubredoxin-like domain. C10, C15, C45, and C48 together coordinate Fe cation.

It belongs to the rubredoxin family. As to quaternary structure, monomer. Fe(3+) is required as a cofactor.

Its function is as follows. Rubredoxin is a small nonheme, iron protein lacking acid-labile sulfide. Its single Fe, chelated to 4 Cys, functions as an electron acceptor and may also stabilize the conformation of the molecule. The polypeptide is Rubredoxin-2 (rd2) (Desulfovibrio desulfuricans (strain ATCC 27774 / DSM 6949 / MB)).